The sequence spans 406 residues: Protein transport protein HofC homolog (406 aa).

3 consecutive transmembrane segments (helical) span residues Met-167–Phe-187, Gln-214–Leu-234, and Met-379–Phe-399.

The protein belongs to the GSP F family.

It is found in the cell inner membrane. This is Protein transport protein HofC homolog (hofC) from Haemophilus influenzae (strain ATCC 51907 / DSM 11121 / KW20 / Rd).